Consider the following 252-residue polypeptide: Hydroxyacylglutathione hydrolase (252 aa).

Histidine 54, histidine 56, aspartate 58, histidine 59, histidine 111, aspartate 130, and histidine 170 together coordinate Zn(2+).

This sequence belongs to the metallo-beta-lactamase superfamily. Glyoxalase II family. Monomer. Requires Zn(2+) as cofactor.

The enzyme catalyses an S-(2-hydroxyacyl)glutathione + H2O = a 2-hydroxy carboxylate + glutathione + H(+). Its pathway is secondary metabolite metabolism; methylglyoxal degradation; (R)-lactate from methylglyoxal: step 2/2. Functionally, thiolesterase that catalyzes the hydrolysis of S-D-lactoyl-glutathione to form glutathione and D-lactic acid. This Francisella philomiragia subsp. philomiragia (strain ATCC 25017 / CCUG 19701 / FSC 153 / O#319-036) protein is Hydroxyacylglutathione hydrolase.